Here is a 417-residue protein sequence, read N- to C-terminus: F-box protein At3g07870 (417 aa).

An F-box domain is found at 22 to 68; it reads GGGLESLPEDIIADIFSRLPISSIARLMFVCRSWRSVLTQHGRLSSS.

The chain is F-box protein At3g07870 from Arabidopsis thaliana (Mouse-ear cress).